Here is a 613-residue protein sequence, read N- to C-terminus: Ribosome-associated molecular chaperone SSB (613 aa).

The interval 1–391 (MADGVFQGAI…ILTGQSTSDE (391 aa)) is nucleotide binding domain (NBD). Residues 16–18 (TTY), Lys73, 205–207 (GGT), 271–278 (ERAKRTLS), and Gly342 each bind ATP. The inter-domain linker stretch occupies residues 392–402 (TKDLLLLDVAP). The tract at residues 403 to 613 (LSLGVGMQGD…RVVTKAMSSR (211 aa)) is substrate binding domain (SBD). The lid domain (SBDalpha) stretch occupies residues 516–612 (SEDIEKMVNQ…KRVVTKAMSS (97 aa)). A Nuclear export signal motif is present at residues 574 to 582 (IEAALADAL).

It belongs to the heat shock protein 70 family. Ssb-type Hsp70 subfamily. As to quaternary structure, binds to ribosomes. Binds close to the ribosomal tunnel exit via contacts with both ribosomal proteins and rRNA. Directly interacts with nascent polypeptides. This interaction is dependent on the ribosome-associated complex (RAC). Interacts with SSE1. Interacts with FES1.

The protein localises to the cytoplasm. It catalyses the reaction ATP + H2O = ADP + phosphate + H(+). Ribosome-bound, Hsp70-type chaperone that assists in the cotranslational folding of newly synthesized proteins in the cytosol. Stimulates folding by interacting with nascent chains, binding to short, largely hydrophobic sequences exposed by unfolded proteins, thereby stabilizing longer, more slowly translated, and aggregation-prone nascent polypeptides and domains that cannot fold stably until fully synthesized. The Hsp70-protein substrate interaction depends on ATP-binding and on allosteric regulation between the NBD and the SBD. The ATP-bound state is characterized by a fast exchange rate of substrate (low affinity state), while in the ADP-bound state exchange is much slower (high affinity state). During the Hsp70 cycle, the chaperone switches between the ATP-bound state (open conformation) and the ADP-bound state (closed conformation) by major conformational rearrangements involving mainly the lid domain. Ssb cooperates with a specific Hsp40/Hsp70 co-chaperone termed the ribosome-associated complex (RAC), which stimulates the ATPase activity of the ribosome-associated pool of Ssbs and switches it to the high affinity substrate binding state. Hsp110 chaperone SSE1 and FES1 act as nucleotide exchange factors that cause substrate release. The sequence is that of Ribosome-associated molecular chaperone SSB (SSB1) from Candida glabrata (strain ATCC 2001 / BCRC 20586 / JCM 3761 / NBRC 0622 / NRRL Y-65 / CBS 138) (Yeast).